The chain runs to 199 residues: Imidazoleglycerol-phosphate dehydratase (199 aa).

Belongs to the imidazoleglycerol-phosphate dehydratase family.

It is found in the cytoplasm. The enzyme catalyses D-erythro-1-(imidazol-4-yl)glycerol 3-phosphate = 3-(imidazol-4-yl)-2-oxopropyl phosphate + H2O. It functions in the pathway amino-acid biosynthesis; L-histidine biosynthesis; L-histidine from 5-phospho-alpha-D-ribose 1-diphosphate: step 6/9. The polypeptide is Imidazoleglycerol-phosphate dehydratase (Roseiflexus sp. (strain RS-1)).